Consider the following 336-residue polypeptide: Phosphate acyltransferase (336 aa).

This sequence belongs to the PlsX family. Homodimer. Probably interacts with PlsY.

It localises to the cytoplasm. The enzyme catalyses a fatty acyl-[ACP] + phosphate = an acyl phosphate + holo-[ACP]. The protein operates within lipid metabolism; phospholipid metabolism. Its function is as follows. Catalyzes the reversible formation of acyl-phosphate (acyl-PO(4)) from acyl-[acyl-carrier-protein] (acyl-ACP). This enzyme utilizes acyl-ACP as fatty acyl donor, but not acyl-CoA. This is Phosphate acyltransferase from Dictyoglomus thermophilum (strain ATCC 35947 / DSM 3960 / H-6-12).